The primary structure comprises 93 residues: RNA-binding protein Hfq (93 aa).

Residues 9–68 (DPFLNALRKERIPVSIFLVNGIKLQGQIESFDQYVVLLKNAVSQMVYKHAISTVVPARNP) form the Sm domain. A compositionally biased stretch (low complexity) spans 74-86 (PAMAAGATAAPAA). Positions 74 to 93 (PAMAAGATAAPAADEGYGNQ) are disordered.

Belongs to the Hfq family. In terms of assembly, homohexamer.

In terms of biological role, RNA chaperone that binds small regulatory RNA (sRNAs) and mRNAs to facilitate mRNA translational regulation in response to envelope stress, environmental stress and changes in metabolite concentrations. Also binds with high specificity to tRNAs. The polypeptide is RNA-binding protein Hfq (Alcanivorax borkumensis (strain ATCC 700651 / DSM 11573 / NCIMB 13689 / SK2)).